A 783-amino-acid chain; its full sequence is Protein DWD HYPERSENSITIVE TO UV-B 1 (783 aa).

2 WD repeats span residues glycine 145–proline 198 and serine 212–leucine 256. Residues arginine 382–arginine 389 carry the Nuclear localization signal motif. WD repeat units follow at residues aspartate 439–tyrosine 480, glycine 485–threonine 525, aspartate 538–valine 577, methionine 581–cysteine 621, serine 625–asparagine 664, and glutamate 666–arginine 710.

As to quaternary structure, interacts directly with DDB1A. Binds to COP1 and RUP1.

It is found in the nucleus. Functionally, may act as a substrate receptor of a CUL4-RING E3 ubiquitin-protein ligase (CRL4) complex involved in the negative regulation of cellular responses to ultraviolet-B (UV-B) illumination, likely in coordination with RUP1. Interacts with COP1 and probably prevents the formation of active UVR8-COP1 complex, thus avoiding UVR8-COP1-mediated positive regulation of UV-B responses. The polypeptide is Protein DWD HYPERSENSITIVE TO UV-B 1 (Arabidopsis thaliana (Mouse-ear cress)).